Consider the following 2623-residue polypeptide: Immunoglobulin superfamily member 10 (2623 aa).

The N-terminal stretch at 1–28 is a signal peptide; sequence MKVKGRGITCLLVSFAVICLVATPGGKA. The region spanning 29–56 is the LRRNT domain; that stretch reads CPRRCACYMPTEVHCTFRYLTSIPDSIP. LRR repeat units lie at residues 58–79, 82–103, 106–127, 130–151, 154–175, and 186–207; these read NVER…DFSG, KLEL…TFSD, ALQV…TFYG, SLTR…VFYG, FLRL…TFVS, and FIKF…MVSY. Residues 219–281 form the LRRCT domain; the sequence is NPWTCDCHLK…VSAAAFQCAK (63 aa). Residues Asn-319 and Asn-439 are each glycosylated (N-linked (GlcNAc...) asparagine). 2 Ig-like C2-type domains span residues 461–567 and 571–661; these read PRAE…YRIT and PLVE…FQVS. Intrachain disulfides connect Cys-497-Cys-551 and Cys-595-Cys-645. A glycan (N-linked (GlcNAc...) asparagine) is linked at Asn-627. Disordered stretches follow at residues 668-692 and 767-788; these read RPLE…HLKE and AMPD…QLPN. 2 N-linked (GlcNAc...) asparagine glycosylation sites follow: Asn-774 and Asn-999. Disordered stretches follow at residues 1334 to 1376 and 1434 to 1453; these read TQTE…AMTP and STIA…TTTR. Residues 1335–1356 show a composition bias toward basic and acidic residues; that stretch reads QTERSRAQTIQREQEPQKKNRT. Residues 1357-1373 show a composition bias toward polar residues; the sequence is DPNISPDQSSGFTTPTA. Ig-like C2-type domains are found at residues 1648-1739, 1745-1836, 1841-1933, 1941-2034, 2037-2135, 2141-2229, 2234-2331, 2337-2427, 2432-2518, and 2528-2623; these read PRIV…VTLS, PRIL…VKIQ, PPVI…VMLT, PRIE…VSLR, PAKI…VHLT, PRIR…YKLD, PPLI…LEVL, PTFR…VILE, PVIL…TLIT, and PRIT…IQVI. 3 disulfide bridges follow: Cys-1670–Cys-1723, Cys-1767–Cys-1820, and Cys-1864–Cys-1917. 2 N-linked (GlcNAc...) asparagine glycosylation sites follow: Asn-1899 and Asn-1962. 7 disulfides stabilise this stretch: Cys-1963–Cys-2016, Cys-2060–Cys-2119, Cys-2163–Cys-2213, Cys-2261–Cys-2313, Cys-2359–Cys-2411, Cys-2454–Cys-2506, and Cys-2550–Cys-2605. Asn-2101 is a glycosylation site (N-linked (GlcNAc...) asparagine). Tyr-2603 carries the post-translational modification Phosphotyrosine.

The protein localises to the secreted. Its function is as follows. Involved in the control of early migration of neurons expressing gonadotropin-releasing hormone (GNRH neurons). May be involved in the maintenance of osteochondroprogenitor cells pool. In Homo sapiens (Human), this protein is Immunoglobulin superfamily member 10 (IGSF10).